Consider the following 290-residue polypeptide: MDIRQLRYFITIAQEQKITSAAKKLHMAQPPLSRQLKQLEDELGVVLFDRNKKKQMTLTYEGAVFLKRAKEILHRFEDAVIEVQELKEEVAGTLAVGSTIYCAALMLEKVTQIKERYPHLTFNIWENEPATLLELLESRQIDAAVTTTLIKSDTVQFKQLDDIPCVLVLSDEAGYPCGDTIKMVDIPSFPLILLRPVNGKGVYNQVMNEFHRLNLEPRIVCECHDSATLLSLVSSGFGASILPVTMIPVHMRNHVHTVHIENNPFIMTPAVMWRTDSYLPKPAQQFLDLF.

The HTH lysR-type domain occupies 1–59; sequence MDIRQLRYFITIAQEQKITSAAKKLHMAQPPLSRQLKQLEDELGVVLFDRNKKKQMTLT. The H-T-H motif DNA-binding region spans 18 to 37; the sequence is ITSAAKKLHMAQPPLSRQLK.

Belongs to the LysR transcriptional regulatory family.

In terms of biological role, could be a positive regulator of bsdBCD expression in response to salicylic acid. The polypeptide is HTH-type transcriptional regulator BsdA (bsdA) (Bacillus subtilis (strain 168)).